The following is a 309-amino-acid chain: Porphobilinogen deaminase (309 aa).

The residue at position 242 (Cys242) is an S-(dipyrrolylmethanemethyl)cysteine.

Belongs to the HMBS family. As to quaternary structure, monomer. Requires dipyrromethane as cofactor.

The catalysed reaction is 4 porphobilinogen + H2O = hydroxymethylbilane + 4 NH4(+). It participates in porphyrin-containing compound metabolism; protoporphyrin-IX biosynthesis; coproporphyrinogen-III from 5-aminolevulinate: step 2/4. Tetrapolymerization of the monopyrrole PBG into the hydroxymethylbilane pre-uroporphyrinogen in several discrete steps. The sequence is that of Porphobilinogen deaminase from Hamiltonella defensa subsp. Acyrthosiphon pisum (strain 5AT).